Consider the following 92-residue polypeptide: UPF0125 protein NMA1005 (92 aa).

Belongs to the UPF0125 (RnfH) family.

The sequence is that of UPF0125 protein NMA1005 from Neisseria meningitidis serogroup A / serotype 4A (strain DSM 15465 / Z2491).